An 874-amino-acid chain; its full sequence is Probable inorganic carbon transporter subunit DabA (874 aa).

Zn(2+)-binding residues include cysteine 398, aspartate 400, histidine 580, and cysteine 595.

The protein belongs to the inorganic carbon transporter (TC 9.A.2) DabA family. In terms of assembly, forms a complex with DabB. It depends on Zn(2+) as a cofactor.

Its subcellular location is the cell membrane. In terms of biological role, part of an energy-coupled inorganic carbon pump. The chain is Probable inorganic carbon transporter subunit DabA from Bacillus cereus (strain ATCC 10987 / NRS 248).